Consider the following 135-residue polypeptide: Ribosome-binding factor A (135 aa).

It belongs to the RbfA family. As to quaternary structure, monomer. Binds 30S ribosomal subunits, but not 50S ribosomal subunits or 70S ribosomes.

Its subcellular location is the cytoplasm. In terms of biological role, one of several proteins that assist in the late maturation steps of the functional core of the 30S ribosomal subunit. Associates with free 30S ribosomal subunits (but not with 30S subunits that are part of 70S ribosomes or polysomes). Required for efficient processing of 16S rRNA. May interact with the 5'-terminal helix region of 16S rRNA. The sequence is that of Ribosome-binding factor A from Hahella chejuensis (strain KCTC 2396).